Here is a 642-residue protein sequence, read N- to C-terminus: Threonine--tRNA ligase (642 aa).

Residues 1–61 (MPVITLPDGS…SEDANLVIFT (61 aa)) form the TGS domain. A catalytic region spans residues 243–534 (DHRKLAKKFD…LIEHYEGSFP (292 aa)). Cysteine 334, histidine 385, and histidine 511 together coordinate Zn(2+).

Belongs to the class-II aminoacyl-tRNA synthetase family. Homodimer. Zn(2+) is required as a cofactor.

It is found in the cytoplasm. The catalysed reaction is tRNA(Thr) + L-threonine + ATP = L-threonyl-tRNA(Thr) + AMP + diphosphate + H(+). Its function is as follows. Catalyzes the attachment of threonine to tRNA(Thr) in a two-step reaction: L-threonine is first activated by ATP to form Thr-AMP and then transferred to the acceptor end of tRNA(Thr). Also edits incorrectly charged L-seryl-tRNA(Thr). The sequence is that of Threonine--tRNA ligase from Cellvibrio japonicus (strain Ueda107) (Pseudomonas fluorescens subsp. cellulosa).